The following is a 387-amino-acid chain: S-adenosylmethionine synthase (387 aa).

ATP is bound at residue H19. D21 is a binding site for Mg(2+). E47 contacts K(+). Q103 serves as a coordination point for L-methionine. The segment at 103-113 is flexible loop; the sequence is QSPDIAQGVEL. Residues 167–169, 233–234, D242, 248–249, A265, and K269 each bind ATP; these read DMK, RF, and RK. L-methionine is bound at residue D242. K273 provides a ligand contact to L-methionine.

This sequence belongs to the AdoMet synthase family. In terms of assembly, homotetramer; dimer of dimers. It depends on Mg(2+) as a cofactor. K(+) is required as a cofactor.

The protein localises to the cytoplasm. The enzyme catalyses L-methionine + ATP + H2O = S-adenosyl-L-methionine + phosphate + diphosphate. Its pathway is amino-acid biosynthesis; S-adenosyl-L-methionine biosynthesis; S-adenosyl-L-methionine from L-methionine: step 1/1. Its function is as follows. Catalyzes the formation of S-adenosylmethionine (AdoMet) from methionine and ATP. The overall synthetic reaction is composed of two sequential steps, AdoMet formation and the subsequent tripolyphosphate hydrolysis which occurs prior to release of AdoMet from the enzyme. This chain is S-adenosylmethionine synthase, found in Mycoplasma capricolum subsp. capricolum (strain California kid / ATCC 27343 / NCTC 10154).